The chain runs to 204 residues: MGAYRYVQELYRKKQSDVMRYLLRIRVWQYRQMTRFHRAPRPSRPDKARRLGYKAKQGFSIFRIRVRRGGRKRPVPKGCTYGKPKSHGVNQLKPYRCLQSVAEERVGRRLGGLRVLNSYWVAQDAAHKYFEVIMVDPAHNAIRRDPNVNWICNAVHKHRELRGLTSAGKSSRGLGKGYRYSQTIGGSRRACWRRRNRLHLRRYR.

The protein belongs to the eukaryotic ribosomal protein eL15 family.

This chain is Large ribosomal subunit protein eL15 (RpL15), found in Anopheles gambiae (African malaria mosquito).